The primary structure comprises 595 residues: MKNIRNFCIIAHIDHGKSTLADRLLEATGTISGKASQDQLLDNMDLERERGITIKSHAIQMRYTFKGTDYVLNLIDTPGHVDFSYEVSRSIAACEGALLVIDASQGIEAQTISNLYLALEHDLTIIPVLNKIDLPGAMPEEVKDQIVDLLGCDREDIIPASAKQGIGIEDILQAIIERISPPTGLVDAPLQAMIFDSVYNSFKGVEVYFRIFNGTIKQGDQVKFVNTGKSYEADEIGVLRLGQIPQESLSAGYVGYLISGIKNAREVKVGDTITHVNNPCKEAIKGFEDVKPMVYAGIYPVESNEYEELRTAIEKLQLNDASLVWTHESSAALGIGFRCGFLGMLHMEIVQERLEREFDMTVITTVPSVQFHVIDKQGDLHEVNAPSELPDPNLIDEIQEPFIRAQIITKPEFIGNIIKLCVDKRGALQNQTYLTPERVELTFKLPLAEVVFDFFDKLKTISKGYASLDYELLGFEASKLVKLDILLNEEKIDALSAIVHRDKAYELGKKLCAKLKELLPKQMFEIPIQAAIGTKVIARETIKAMRKNVIAKCYGGDISRKRKLLEKQKKGKKRMRQIGSVEVPQEAFLAVLKLE.

A tr-type G domain is found at lysine 2–threonine 183. GTP is bound by residues aspartate 14–threonine 19 and asparagine 130–aspartate 133.

The protein belongs to the TRAFAC class translation factor GTPase superfamily. Classic translation factor GTPase family. LepA subfamily.

The protein localises to the cell inner membrane. It catalyses the reaction GTP + H2O = GDP + phosphate + H(+). Its function is as follows. Required for accurate and efficient protein synthesis under certain stress conditions. May act as a fidelity factor of the translation reaction, by catalyzing a one-codon backward translocation of tRNAs on improperly translocated ribosomes. Back-translocation proceeds from a post-translocation (POST) complex to a pre-translocation (PRE) complex, thus giving elongation factor G a second chance to translocate the tRNAs correctly. Binds to ribosomes in a GTP-dependent manner. This Amoebophilus asiaticus (strain 5a2) protein is Elongation factor 4.